Consider the following 366-residue polypeptide: Spermidine/putrescine import ATP-binding protein PotA (366 aa).

The ABC transporter domain occupies 8–239; it reads IRFENVTKQF…PINKFVADFI (232 aa). 41-48 serves as a coordination point for ATP; it reads GPSGCGKT.

Belongs to the ABC transporter superfamily. Spermidine/putrescine importer (TC 3.A.1.11.1) family. In terms of assembly, the complex is composed of two ATP-binding proteins (PotA), two transmembrane proteins (PotB and PotC) and a solute-binding protein (PotD).

The protein localises to the cell membrane. The catalysed reaction is ATP + H2O + polyamine-[polyamine-binding protein]Side 1 = ADP + phosphate + polyamineSide 2 + [polyamine-binding protein]Side 1.. In terms of biological role, part of the ABC transporter complex PotABCD involved in spermidine/putrescine import. Responsible for energy coupling to the transport system. The polypeptide is Spermidine/putrescine import ATP-binding protein PotA (Listeria innocua serovar 6a (strain ATCC BAA-680 / CLIP 11262)).